Consider the following 319-residue polypeptide: Beta-ketoacyl-[acyl-carrier-protein] synthase III (319 aa).

Catalysis depends on residues C113 and H246. The tract at residues 247–251 (QANLR) is ACP-binding. Residue N276 is part of the active site.

Belongs to the thiolase-like superfamily. FabH family. As to quaternary structure, homodimer.

The protein resides in the cytoplasm. It catalyses the reaction malonyl-[ACP] + acetyl-CoA + H(+) = 3-oxobutanoyl-[ACP] + CO2 + CoA. It participates in lipid metabolism; fatty acid biosynthesis. In terms of biological role, catalyzes the condensation reaction of fatty acid synthesis by the addition to an acyl acceptor of two carbons from malonyl-ACP. Catalyzes the first condensation reaction which initiates fatty acid synthesis and may therefore play a role in governing the total rate of fatty acid production. Possesses both acetoacetyl-ACP synthase and acetyl transacylase activities. Its substrate specificity determines the biosynthesis of branched-chain and/or straight-chain of fatty acids. The protein is Beta-ketoacyl-[acyl-carrier-protein] synthase III of Chromobacterium violaceum (strain ATCC 12472 / DSM 30191 / JCM 1249 / CCUG 213 / NBRC 12614 / NCIMB 9131 / NCTC 9757 / MK).